A 483-amino-acid chain; its full sequence is Probable cobyric acid synthase (483 aa).

One can recognise a GATase cobBQ-type domain in the interval 247 to 433 (ELHIQIIKLP…LHGIFHNFAF (187 aa)). The active-site Nucleophile is Cys325. The active site involves His425.

Belongs to the CobB/CobQ family. CobQ subfamily.

It participates in cofactor biosynthesis; adenosylcobalamin biosynthesis. Functionally, catalyzes amidations at positions B, D, E, and G on adenosylcobyrinic A,C-diamide. NH(2) groups are provided by glutamine, and one molecule of ATP is hydrogenolyzed for each amidation. This chain is Probable cobyric acid synthase, found in Thermococcus gammatolerans (strain DSM 15229 / JCM 11827 / EJ3).